We begin with the raw amino-acid sequence, 62 residues long: Conotoxin Qc5.2 (62 aa).

A signal peptide spans 1-22; it reads MRCVPVFIILLLLSPSAPSVDA. A propeptide spanning residues 23-48 is cleaved from the precursor; that stretch reads HPMTKDDVPQASLHDDAKRTLQVPWM. Valine 60 is subject to Valine amide.

This sequence belongs to the conotoxin T superfamily. In terms of processing, contains 2 disulfide bonds that can be either 'C1-C3, C2-C4' or 'C1-C4, C2-C3', since these disulfide connectivities have been observed for conotoxins with cysteine framework V (for examples, see AC P0DQQ7 and AC P81755). In terms of tissue distribution, expressed by the venom duct.

The protein resides in the secreted. This chain is Conotoxin Qc5.2, found in Conus quercinus (Oak cone).